Here is a 167-residue protein sequence, read N- to C-terminus: Novel acetylcholine receptor chaperone (167 aa).

Topologically, residues 1-5 are cytoplasmic; it reads MASPR. Residues 6–26 traverse the membrane as a helical segment; that stretch reads TITIMALSVALGLFFVFMGTI. Topologically, residues 27–61 are lumenal; the sequence is KLTPRLSKDAYSEMKRAYKSYVRALPLLKKMGINS. The segment at 43–54 is interaction with NGFR; the sequence is AYKSYVRALPLL. The helical transmembrane segment at 62-82 threads the bilayer; it reads ILLRKSIGALEVACGIVMTLV. Residues 83–88 lie on the Cytoplasmic side of the membrane; that stretch reads PGRPKD. Residues 89-109 traverse the membrane as a helical segment; that stretch reads VANFFLLLLVLAVLFFHQLVG. Residues 110-114 lie on the Lumenal side of the membrane; sequence DPLKR. Residues 115–132 form a helical membrane-spanning segment; sequence YAHALVFGILLTCRLLIA. Residues 133–167 are Cytoplasmic-facing; sequence RKPEDRSSEKKALPESAEEQPSLYEKAPQGKVKVS. Over residues 135–145 the composition is skewed to basic and acidic residues; the sequence is PEDRSSEKKAL. Residues 135-167 form a disordered region; it reads PEDRSSEKKALPESAEEQPSLYEKAPQGKVKVS.

Belongs to the DoxX family. As to quaternary structure, may interact with NGFR. Interacts with RPN1, RPN2 and CANX. As to expression, brain (at protein level). Expressed in the spinal cord dorsal horn (at protein level).

Its subcellular location is the peroxisome membrane. The protein resides in the cytoplasmic vesicle. The protein localises to the endoplasmic reticulum membrane. Functionally, molecular chaperone which mediates the proper assembly and functional expression of the nicotinic acetylcholine receptors (nAChRs) throughout the brain. Essential for the proper folding, assembly, function and surface trafficking of alpha-7 (CHRNA7), alpha-4-beta-2, alpha-3-beta-2 and alpha-3-beta-4 receptors. Stably associates with ribophorin-1 (RPN1) and ribophorin-2 (RPN2) (components of the oligosaccharyl transferase (OST) complex) and with calnexin (CANX), both of which are critical for NACHO-mediated effects on CHRNA7 assembly and function. Facilitates the proper folding and assembly of alpha-6-beta-2 and alpha-6-beta-2-beta-3 receptors and acts at early stages of the nAChRs subunit assembly. Promotes the expression of the alpha-4(2):beta-2(3) stoichiometric form over the alpha-4(3):beta-2(2) form. This chain is Novel acetylcholine receptor chaperone, found in Mus musculus (Mouse).